We begin with the raw amino-acid sequence, 156 residues long: Small ribosomal subunit protein uS7 (156 aa).

This sequence belongs to the universal ribosomal protein uS7 family. As to quaternary structure, part of the 30S ribosomal subunit. Contacts proteins S9 and S11.

In terms of biological role, one of the primary rRNA binding proteins, it binds directly to 16S rRNA where it nucleates assembly of the head domain of the 30S subunit. Is located at the subunit interface close to the decoding center, probably blocks exit of the E-site tRNA. The polypeptide is Small ribosomal subunit protein uS7 (Ruminiclostridium cellulolyticum (strain ATCC 35319 / DSM 5812 / JCM 6584 / H10) (Clostridium cellulolyticum)).